The following is a 294-amino-acid chain: Complement C1q tumor necrosis factor-related protein 2 (294 aa).

The N-terminal stretch at 1-24 (MTIFKKVTTMISWVLLACALPCAA) is a signal peptide. The interval 42-156 (QLVCSLPGPQ…PGPCSCGSSR (115 aa)) is disordered. In terms of domain architecture, Collagen-like spans 48–150 (PGPQGPPGPP…KGEPGLPGPC (103 aa)). Residues 50 to 59 (PQGPPGPPGA) show a composition bias toward pro residues. Residues 75–87 (DGQDGQDGDRGDS) are compositionally biased toward basic and acidic residues. Residues 105–129 (KGKAGAIGRAGPRGPKGVSGTPGKH) are compositionally biased toward low complexity. Residues 154–290 (SSRAKSAFSV…GFLIYADQGD (137 aa)) enclose the C1q domain.

As to quaternary structure, may interact with ERFE.

The protein localises to the secreted. Its function is as follows. Involved in the regulation of lipid metabolism in adipose tissue and liver. This is Complement C1q tumor necrosis factor-related protein 2 (C1qtnf2) from Mus musculus (Mouse).